The sequence spans 253 residues: uncharacterized protein (253 aa).

This is an uncharacterized protein from Acanthamoeba polyphaga mimivirus (APMV).